The following is a 180-amino-acid chain: ATP-dependent protease subunit HslV (180 aa).

The active site involves threonine 6. Na(+) contacts are provided by alanine 164, cysteine 167, and threonine 170.

It belongs to the peptidase T1B family. HslV subfamily. A double ring-shaped homohexamer of HslV is capped on each side by a ring-shaped HslU homohexamer. The assembly of the HslU/HslV complex is dependent on binding of ATP.

Its subcellular location is the cytoplasm. It catalyses the reaction ATP-dependent cleavage of peptide bonds with broad specificity.. Its activity is regulated as follows. Allosterically activated by HslU binding. Protease subunit of a proteasome-like degradation complex believed to be a general protein degrading machinery. The chain is ATP-dependent protease subunit HslV from Borrelia duttonii (strain Ly).